The sequence spans 589 residues: Putative phospholipase B-like 2 (589 aa).

An N-terminal signal peptide occupies residues 1-41 (MVAPMYGSPGGRLARAVTRALALALVLALLVGLFLSGLTGA). N-linked (GlcNAc...) asparagine glycans are attached at residues Asn-88 and Asn-110. Cys-142 and Cys-152 form a disulfide bridge. Asn-174, Asn-231, Asn-436, and Asn-465 each carry an N-linked (GlcNAc...) asparagine glycan. Cys-492 and Cys-495 are oxidised to a cystine. Residue Asn-515 is glycosylated (N-linked (GlcNAc...) asparagine).

The protein belongs to the phospholipase B-like family. Interacts with IGF2R. Post-translationally, glycosylated; contains mannose 6-phosphate sugars.

The protein localises to the lysosome lumen. Its function is as follows. Putative phospholipase. The protein is Putative phospholipase B-like 2 (PLBD2) of Bos taurus (Bovine).